Here is a 405-residue protein sequence, read N- to C-terminus: Deoxyguanosinetriphosphate triphosphohydrolase-like protein (405 aa).

The 145-residue stretch at 75 to 219 folds into the HD domain; the sequence is RLTHTIEVAQ…AAIADDIAYN (145 aa).

It belongs to the dGTPase family. Type 2 subfamily.

This Rhizobium etli (strain CIAT 652) protein is Deoxyguanosinetriphosphate triphosphohydrolase-like protein.